A 241-amino-acid polypeptide reads, in one-letter code: Small ribosomal subunit protein uS3 (241 aa).

In terms of domain architecture, KH type-2 spans 39 to 108 (IREGVLKLLK…NLKVEVKVIE (70 aa)). The disordered stretch occupies residues 215-241 (SQRVSEKAPMNNDRRFNNKNNNRGGRK). Positions 232–241 (NKNNNRGGRK) are enriched in low complexity.

It belongs to the universal ribosomal protein uS3 family. Part of the 30S ribosomal subunit. Forms a tight complex with proteins S10 and S14.

In terms of biological role, binds the lower part of the 30S subunit head. Binds mRNA in the 70S ribosome, positioning it for translation. The chain is Small ribosomal subunit protein uS3 from Mesoplasma florum (Acholeplasma florum).